A 664-amino-acid polypeptide reads, in one-letter code: Putative carboxypeptidase suro-1 (664 aa).

Residues 1–23 (MRYLCKSILLAVHTILLVGSVCC) form the signal peptide. A propeptide spans 24-110 (STDVHNTDDK…MSVPDVEKLI (87 aa)) (activation peptide). A Peptidase M14 domain is found at 160-473 (DYASYADMVK…EGFREVVDAV (314 aa)). Zn(2+) is bound by residues histidine 219 and glutamate 222. Substrate-binding positions include 219–222 (HARE), arginine 281, and 306–307 (NR). Histidine 361 lines the Zn(2+) pocket. A substrate-binding site is contributed by 362-363 (SY). Glutamate 437 functions as the Proton donor/acceptor in the catalytic mechanism. Positions 512–543 (ASQAAGSTTRSTTTLKTSTTSVSTTSEATSPS) are enriched in low complexity. Residues 512-590 (ASQAAGSTTR…TTTTEEEDVT (79 aa)) are disordered. Residues 564–573 (PTPPMAPPIM) are compositionally biased toward pro residues. Low complexity predominate over residues 574 to 583 (SPSTEFSTTT). Residues 621-657 (CRDMRYSCGFWLKNNKQVCEEQQSFMRAQCAYTCKFC) enclose the ShKT domain. Cystine bridges form between cysteine 621-cysteine 657, cysteine 628-cysteine 650, and cysteine 639-cysteine 654.

The protein belongs to the peptidase M14 family. Requires Zn(2+) as cofactor. Localizes in stripes along the cuticle.

Its subcellular location is the cytoplasmic vesicle. The protein localises to the secreted. In terms of biological role, may play a role in processing or organization of cuticle collagen proteins, including rol-6 and col-19. In Caenorhabditis elegans, this protein is Putative carboxypeptidase suro-1.